We begin with the raw amino-acid sequence, 276 residues long: Small ribosomal subunit protein uS2 (276 aa).

It belongs to the universal ribosomal protein uS2 family.

The chain is Small ribosomal subunit protein uS2 from Chlamydia abortus (strain DSM 27085 / S26/3) (Chlamydophila abortus).